Consider the following 205-residue polypeptide: MTKIVRSKYKASRRLGVSLWGDSKDAFNTRNYRPGQHGQNTMIKTSDYGLHLKAKQRLKCYYGRVTEKQFRNTFALAQRMQGNTGENFIGLLESRLDTVVYRMNIAPTIFAARQLVSHGHIKLNGKKADIASIRLKEGDIIEIKESIQQIPLIQESIAKQGQTTPKYLSFDVSSLTGKYLRVPALSDVPYPFEAEVHLVIELYSR.

The S4 RNA-binding domain occupies 94–157 (SRLDTVVYRM…QQIPLIQESI (64 aa)).

This sequence belongs to the universal ribosomal protein uS4 family. As to quaternary structure, part of the 30S ribosomal subunit. Contacts protein S5. The interaction surface between S4 and S5 is involved in control of translational fidelity.

Functionally, one of the primary rRNA binding proteins, it binds directly to 16S rRNA where it nucleates assembly of the body of the 30S subunit. With S5 and S12 plays an important role in translational accuracy. In Rickettsia typhi (strain ATCC VR-144 / Wilmington), this protein is Small ribosomal subunit protein uS4.